The following is a 585-amino-acid chain: Arginine--tRNA ligase (585 aa).

The 'HIGH' region signature appears at 126–136 (PNIAKEMHVGH).

It belongs to the class-I aminoacyl-tRNA synthetase family. In terms of assembly, monomer.

Its subcellular location is the cytoplasm. It catalyses the reaction tRNA(Arg) + L-arginine + ATP = L-arginyl-tRNA(Arg) + AMP + diphosphate. In Crocosphaera subtropica (strain ATCC 51142 / BH68) (Cyanothece sp. (strain ATCC 51142)), this protein is Arginine--tRNA ligase.